Reading from the N-terminus, the 166-residue chain is ATP synthase subunit b (166 aa).

Residues Thr15–Val37 traverse the membrane as a helical segment.

Belongs to the ATPase B chain family. As to quaternary structure, F-type ATPases have 2 components, F(1) - the catalytic core - and F(0) - the membrane proton channel. F(1) has five subunits: alpha(3), beta(3), gamma(1), delta(1), epsilon(1). F(0) has three main subunits: a(1), b(2) and c(10-14). The alpha and beta chains form an alternating ring which encloses part of the gamma chain. F(1) is attached to F(0) by a central stalk formed by the gamma and epsilon chains, while a peripheral stalk is formed by the delta and b chains.

It is found in the cell membrane. F(1)F(0) ATP synthase produces ATP from ADP in the presence of a proton or sodium gradient. F-type ATPases consist of two structural domains, F(1) containing the extramembraneous catalytic core and F(0) containing the membrane proton channel, linked together by a central stalk and a peripheral stalk. During catalysis, ATP synthesis in the catalytic domain of F(1) is coupled via a rotary mechanism of the central stalk subunits to proton translocation. In terms of biological role, component of the F(0) channel, it forms part of the peripheral stalk, linking F(1) to F(0). The polypeptide is ATP synthase subunit b (Lactobacillus gasseri (strain ATCC 33323 / DSM 20243 / BCRC 14619 / CIP 102991 / JCM 1131 / KCTC 3163 / NCIMB 11718 / NCTC 13722 / AM63)).